We begin with the raw amino-acid sequence, 94 residues long: Small ribosomal subunit protein bS6 (94 aa).

Belongs to the bacterial ribosomal protein bS6 family.

Binds together with bS18 to 16S ribosomal RNA. The chain is Small ribosomal subunit protein bS6 from Fusobacterium nucleatum subsp. nucleatum (strain ATCC 25586 / DSM 15643 / BCRC 10681 / CIP 101130 / JCM 8532 / KCTC 2640 / LMG 13131 / VPI 4355).